The primary structure comprises 367 residues: Cyclin-Y-like protein 1 (367 aa).

3 positions are modified to phosphoserine: S73, S111, and S118. One can recognise a Cyclin N-terminal domain in the interval 186-291; sequence EYFKHDPEHK…FLELLQFNIN (106 aa). A Phosphoserine modification is found at S352.

It belongs to the cyclin family. Cyclin Y subfamily. In terms of assembly, interacts with CDK16; this interaction mutually increases the stability of CDK16 and CCNYL1 and increases the kinase activity of CDK16. As to expression, highly expressed in the testis. Largely restricted to germ cells in the testis.

Its subcellular location is the cell membrane. Functionally, key regulator of Wnt signaling implicated in various biological processes including male fertility, embryonic neurogenesis and cortex development. Activates the cyclin-dependent kinase CDK16, and promotes sperm maturation. This is Cyclin-Y-like protein 1 from Mus musculus (Mouse).